Reading from the N-terminus, the 459-residue chain is Jacalin-related lectin 12 (459 aa).

Jacalin-type lectin domains lie at 2–148 (SQDS…YFTP), 151–296 (PTRM…YITT), and 298–443 (TLTK…YSFP).

This sequence belongs to the jacalin lectin family.

This chain is Jacalin-related lectin 12 (JAL12), found in Arabidopsis thaliana (Mouse-ear cress).